The following is a 339-amino-acid chain: MNIQQAIKQIVKKQDLSQNEMQKVMNDIMTGKTTDTQTSGFLVGLAIKGESIDEITAVVKIIRSFTKSVTIKNTKHLVDTCGTGGDGLGLFNISTACAFVVAAAGGSVAKHGNRGISSKSGSADVLKAAGVNLNMSVERISKCIEKIGIGFMFAPFHHHSIKYTTNVRKDLAIKTIFNIVGPLTNPAKVPNQIIGVYTQNLVEPIAHVLKKLGSKHIIVVHSKDGLDEISIADDTFVAELKNGKIKTYTINPTNFGLPLGNLDDIKVNNADDSLILIQQALDGKDSVAKNIVALNSGAAIYVCELANSLQEGVSKALKILNSGVAHQKLDDFVRESTGC.

5-phospho-alpha-D-ribose 1-diphosphate contacts are provided by residues G82, 85-86 (GD), 92-95 (NIST), 110-118 (KHGNRGISS), and S122. Residue G82 coordinates anthranilate. S94 provides a ligand contact to Mg(2+). N113 provides a ligand contact to anthranilate. Residue R168 coordinates anthranilate. Mg(2+) is bound by residues D227 and E228.

It belongs to the anthranilate phosphoribosyltransferase family. As to quaternary structure, homodimer. Mg(2+) is required as a cofactor.

It catalyses the reaction N-(5-phospho-beta-D-ribosyl)anthranilate + diphosphate = 5-phospho-alpha-D-ribose 1-diphosphate + anthranilate. It participates in amino-acid biosynthesis; L-tryptophan biosynthesis; L-tryptophan from chorismate: step 2/5. Functionally, catalyzes the transfer of the phosphoribosyl group of 5-phosphorylribose-1-pyrophosphate (PRPP) to anthranilate to yield N-(5'-phosphoribosyl)-anthranilate (PRA). This Vesicomyosocius okutanii subsp. Calyptogena okutanii (strain HA) protein is Anthranilate phosphoribosyltransferase.